We begin with the raw amino-acid sequence, 1114 residues long: MSASTETHHASEAAVPTAPRPRPGLGTKNGRLHQVPHIAGLILGVFSVLVFLWSISPVLRYYVHVPREYVDTYYFDAPDTSLSWALVVALLAAALASRKRIAWWLLTIYLVLFLITNVIVSITDKNVNAMAAAVVQVVLIGILIAARPEFYTRVRRGAGWKALGVLIVGLAIGTLLGWGLVELFPGTLPQNERFLWALNRVTALAAADNEQFTGRPHGFVNTLLGLFGAIALLAAVITLFRAQRSHNALTGNDESALRGLLLQYGADDSLGYFATRRDKAVVFAPSGKAAITYRVELGVCLASGDPIGDPEAWPHAIEEWQALASQYGWATAVMGASETGATAYNKAGLTVLQLGDEAILRTREFNLSGRDMRQVRQAVTRVRRQGVTVRIRRHRDVPAEEMAETIRLADAWRDTETERGFSMALGRLGDRLDGDCLLVEAVAEDGEIDGILSLVPWGPTGVSLDLMRRKPTSPNGVVELMVSELATTSDQFGITKVSLNFAVFRSVFEEGSRIGAGPILRIWRSILVFFSRWWQLEALYRSNVKYQPEWVPRFLCFEDNRELLRVGFASAVAEGFVTLPRFGRSGTRDALEHTGTHAAVPAALVAAEGLHSDGSAPGEGLAPTATGPKRPEQVRVRLDKLAGLAEQGIDPYPVAYPPSHTVTEAVESPEGTTVRIAGRLLRIRDYGGVVFAVVRDWSGDIQILVDEARVGTDRIRAFAAEFDLGDLVEVAGVIGYSRRGALSLLANEWRMTGKCLHPLPDKWKGLSDPETRVRQRYVDLAINSDARRLLEARSAVVKSLRDSLGGRGFLEVETPILQQVHGGANAAPFLTHINAYNLDLYLRIAPELYLKRLCVAGMEKVFEIGRVFRNEGVDFKHNPEFTILEAYEAHSDYEKMMVLCRELIQTAAIAAYGREIIMRPGPDGALVEVDISGEWPVKTMHQAVAEKLGVDVSPETPLTELQRLCDEHEIPYQSTWDAGAVAQEMYEHLVEDYTEFPTFYTNFPTSMSPLTRPHPTIPGVAAKWDLVAWGVELGTAYSELTDPVDQRNRLTEQSMLAAGGDEEAMELDEDFLQALEHAMPPTGGLGMGVDRVVMLITGGSIRETLAFPLAKPRQ.

Over residues 1–11 (MSASTETHHAS) the composition is skewed to basic and acidic residues. The tract at residues 1-26 (MSASTETHHASEAAVPTAPRPRPGLG) is disordered. Positions 1–618 (MSASTETHHA…GLHSDGSAPG (618 aa)) are phosphatidylglycerol lysyltransferase. Transmembrane regions (helical) follow at residues 38–58 (IAGLILGVFSVLVFLWSISPV), 77–97 (APDTSLSWALVVALLAAALAS), 101–121 (IAWWLLTIYLVLFLITNVIVS), 126–146 (NVNAMAAAVVQVVLIGILIAA), 164–184 (GVLIVGLAIGTLLGWGLVELF), and 219–239 (FVNTLLGLFGAIALLAAVITL). The interval 619–1114 (EGLAPTATGP…LAFPLAKPRQ (496 aa)) is lysine--tRNA ligase. The segment at residues 674–751 (VRIAGRLLRI…LSLLANEWRM (78 aa)) is a DNA-binding region (OB). 2 residues coordinate Mg(2+): Asp1025 and Glu1032.

The protein in the N-terminal section; belongs to the LPG synthetase family. This sequence in the C-terminal section; belongs to the class-II aminoacyl-tRNA synthetase family. The cofactor is Mg(2+).

It localises to the cell membrane. The enzyme catalyses tRNA(Lys) + L-lysine + ATP = L-lysyl-tRNA(Lys) + AMP + diphosphate. The catalysed reaction is L-lysyl-tRNA(Lys) + a 1,2-diacyl-sn-glycero-3-phospho-(1'-sn-glycerol) = a 1,2-diacyl-sn-glycero-3-phospho-1'-(3'-O-L-lysyl)-sn-glycerol + tRNA(Lys). In terms of biological role, catalyzes the production of L-lysyl-tRNA(Lys)transfer and the transfer of a lysyl group from L-lysyl-tRNA(Lys) to membrane-bound phosphatidylglycerol (PG), which produces lysylphosphatidylglycerol (LPG), one of the components of the bacterial membrane with a positive net charge. LPG synthesis contributes to the resistance to cationic antimicrobial peptides (CAMPs) and likely protects M.tuberculosis against the CAMPs produced by competiting microorganisms (bacteriocins). In fact, the modification of anionic phosphatidylglycerol with positively charged L-lysine results in repulsion of the peptides. This Rhodococcus jostii (strain RHA1) protein is Lysylphosphatidylglycerol biosynthesis bifunctional protein LysX (lysX).